The following is a 267-amino-acid chain: Urease accessory protein UreD 2 (267 aa).

This sequence belongs to the UreD family. As to quaternary structure, ureD, UreF and UreG form a complex that acts as a GTP-hydrolysis-dependent molecular chaperone, activating the urease apoprotein by helping to assemble the nickel containing metallocenter of UreC. The UreE protein probably delivers the nickel.

It is found in the cytoplasm. Its function is as follows. Required for maturation of urease via the functional incorporation of the urease nickel metallocenter. This Synechococcus sp. (strain JA-3-3Ab) (Cyanobacteria bacterium Yellowstone A-Prime) protein is Urease accessory protein UreD 2.